A 144-amino-acid polypeptide reads, in one-letter code: Large ribosomal subunit protein uL15 (144 aa).

The disordered stretch occupies residues 1–54 (MRLNTLSPAEGSKKAGKRLGRGIGSGLGKTGGRGHKGQKSRSGGGVRRGFEGGQ). A compositionally biased stretch (gly residues) spans 21 to 31 (RGIGSGLGKTG).

This sequence belongs to the universal ribosomal protein uL15 family. Part of the 50S ribosomal subunit.

In terms of biological role, binds to the 23S rRNA. This is Large ribosomal subunit protein uL15 from Klebsiella pneumoniae (strain 342).